A 185-amino-acid polypeptide reads, in one-letter code: Ribosome-recycling factor (185 aa).

Belongs to the RRF family.

The protein resides in the cytoplasm. Its function is as follows. Responsible for the release of ribosomes from messenger RNA at the termination of protein biosynthesis. May increase the efficiency of translation by recycling ribosomes from one round of translation to another. This chain is Ribosome-recycling factor, found in Geobacter sulfurreducens (strain ATCC 51573 / DSM 12127 / PCA).